Reading from the N-terminus, the 664-residue chain is Sodium/glucose cotransporter 1 (664 aa).

Topologically, residues 1-24 (MDSSTWSPPATATAEPLQAYERIR) are extracellular. Residues 25–47 (NAADISVIVIYFVVVMAVGLWAM) traverse the membrane as a helical segment. The Cytoplasmic segment spans residues 48 to 66 (FSTNRGTVGGFFLAGRSMV). The helical transmembrane segment at 67–90 (WWPIGASLFASNIGSGHFVGLAGT) threads the bilayer. The Extracellular segment spans residues 91 to 95 (GAAAG). Residues 96 to 117 (IATGGFEWNALILVVLLGWVFV) form a helical membrane-spanning segment. The Cytoplasmic segment spans residues 118 to 139 (PIYIKAGVVTMPEYLRKRFGGQ). The helical transmembrane segment at 140–169 (RIQVYLSVLSLVLYIFTKISADIFSGAIFI) threads the bilayer. Topologically, residues 170–176 (NLALGLD) are extracellular. A helical membrane pass occupies residues 177–193 (LYLAIFILLAITALYTI). Residues 194 to 202 (TGGLAAVIY) are Cytoplasmic-facing. The chain crosses the membrane as a helical span at residues 203–221 (TDTLQTVIMLLGSFILTGF). Residues 222–275 (AFHEVGGYSAFVTKYMNAIPTVTSYGNTTVKKECYTPRADSFHIFRDPLKGDLP) lie on the Extracellular side of the membrane. Asn248 is a glycosylation site (N-linked (GlcNAc...) asparagine). Disulfide bonds link Cys255–Cys511, Cys255–Cys610, Cys345–Cys351, Cys355–Cys361, and Cys517–Cys522. Residues 276–295 (WPGLIFGLTIISLWYWCTDQ) traverse the membrane as a helical segment. The Cytoplasmic segment spans residues 296 to 309 (VIVQRCLSAKNMSH). A helical transmembrane segment spans residues 310–331 (VKAGCIMCGYMKLLPMFLMVMP). The Extracellular segment spans residues 332–375 (GMISRILFTEKVACTVPSECEKYCGTKVGCTNIAYPTLVVELMP). Residues 376–406 (NGLRGLMLSVMLASLMSSLTSIFNSASTLFT) traverse the membrane as a helical segment. Over 407-422 (MDIYTKIRKKASEKEL) the chain is Cytoplasmic. The helical transmembrane segment at 423–444 (MIAGRLFMLVLIGVSIAWVPIV) threads the bilayer. Residues 445–451 (QSAQSGQ) lie on the Extracellular side of the membrane. Residues 452-477 (LFDYIQSITSYLGPPIAAVFLLAIFC) form a helical membrane-spanning segment. Position 457 (Gln457) interacts with D-glucose. Residues 478-481 (KRVN) are Cytoplasmic-facing. A helical transmembrane segment spans residues 482–504 (EPGAFWGLIIGFLIGVSRMITEF). Residues 505–525 (AYGTGSCMEPSNCPTIICGVH) are Extracellular-facing. A helical membrane pass occupies residues 526–547 (YLYFAIILFVITIIVILAISLF). Topologically, residues 548–644 (TKPIADVHLY…TSEKRLWRMV (97 aa)) are cytoplasmic. The helical transmembrane segment at 645–662 (VNINGIILLAVAVFCHAY) threads the bilayer. At 663–664 (FA) the chain is on the extracellular side.

The protein belongs to the sodium:solute symporter (SSF) (TC 2.A.21) family. In terms of processing, N-glycosylation is not necessary for the cotransporter function.

It is found in the apical cell membrane. It catalyses the reaction D-glucose(out) + 2 Na(+)(out) = D-glucose(in) + 2 Na(+)(in). The enzyme catalyses D-galactose(out) + 2 Na(+)(out) = D-galactose(in) + 2 Na(+)(in). Enhanced by the interaction with PDZK1IP1/MAP17; but unlike SLC5A2/SGLT2, PDZK1IP1 is not essential for SLC5A1 transporter activity. Possibly modulated by cholesterol binding. Its function is as follows. Electrogenic Na(+)-coupled sugar symporter that actively transports D-glucose or D-galactose at the plasma membrane, with a Na(+) to sugar coupling ratio of 2:1. Transporter activity is driven by a transmembrane Na(+) electrochemical gradient set by the Na(+)/K(+) pump. Has a primary role in the transport of dietary monosaccharides from enterocytes to blood. Responsible for the absorption of D-glucose or D-galactose across the apical brush-border membrane of enterocytes, whereas basolateral exit is provided by GLUT2. Additionally, functions as a D-glucose sensor in enteroendocrine cells, triggering the secretion of the incretins GCG and GIP that control food intake and energy homeostasis. Together with SGLT2, functions in reabsorption of D-glucose from glomerular filtrate, playing a nonredundant role in the S3 segment of the proximal tubules. Transports D-glucose into endometrial epithelial cells, controlling glycogen synthesis and nutritional support for the embryo as well as the decidual transformation of endometrium prior to conception. Acts as a water channel enabling passive water transport in response to the osmotic gradient created upon sugar and Na(+) uptake. Has high water conductivity comparable to aquaporins and therefore is expected to play an important role in transepithelial water permeability, especially in the small intestine. The sequence is that of Sodium/glucose cotransporter 1 (SLC5A1) from Ovis aries (Sheep).